The primary structure comprises 638 residues: 1-deoxy-D-xylulose-5-phosphate synthase (638 aa).

Residues histidine 76 and 117–119 (AHS) each bind thiamine diphosphate. Aspartate 148 lines the Mg(2+) pocket. Thiamine diphosphate-binding positions include 149–150 (GS), asparagine 177, tyrosine 287, and glutamate 369. Mg(2+) is bound at residue asparagine 177.

Belongs to the transketolase family. DXPS subfamily. In terms of assembly, homodimer. Mg(2+) serves as cofactor. It depends on thiamine diphosphate as a cofactor.

It catalyses the reaction D-glyceraldehyde 3-phosphate + pyruvate + H(+) = 1-deoxy-D-xylulose 5-phosphate + CO2. The protein operates within metabolic intermediate biosynthesis; 1-deoxy-D-xylulose 5-phosphate biosynthesis; 1-deoxy-D-xylulose 5-phosphate from D-glyceraldehyde 3-phosphate and pyruvate: step 1/1. Catalyzes the acyloin condensation reaction between C atoms 2 and 3 of pyruvate and glyceraldehyde 3-phosphate to yield 1-deoxy-D-xylulose-5-phosphate (DXP). In Rhodopseudomonas palustris (strain HaA2), this protein is 1-deoxy-D-xylulose-5-phosphate synthase.